The primary structure comprises 470 residues: MSPSTTSKMSLEKMWEEVTCSICLDPMVEPMSIECGHCFCKECIFEVGKNGGSSCPECRQQFLLRNLRPNRHIANMVENLKQIAQNTKKSTQETHCMKHGEKLHLFCEEDGQALCWVCAQSGKHRDHTRVPIEEAAKVYQEKIHVVLEKLRKGKELAEKMEMDLTMQRTDWKRNIDTQKSRIHAEFALQNSLLAQEEQRQLQRLEKDQREYLRLLGKKEAELAEKNQALQELISELERRIRGSELELLQEVRIILERSGSWNLDTLDIDAPDLTSTCPVPGRKKMLRTCWVHITLDRNTANSWLIISKDRRQVRMGDTHQNVSDNKERFSNYPMVLGAQRFSSGKMYWEVDVTQKEAWDLGVCRDSVQRKGQFSLSPENGFWTIWLWQDSYEAGTSPQTTLHIQVPPCQIGIFVDYEAGVVSFYNITDHGSLIYTFSECVFAGPLRPFFNVGFNYSGGNAAPLKLCPLKM.

The RING-type zinc finger occupies 20-59 (CSICLDPMVEPMSIECGHCFCKECIFEVGKNGGSSCPECR). Residues C96, H99, C118, and H124 each contribute to the Zn(2+) site. The B box-type zinc finger occupies 96-127 (CMKHGEKLHLFCEEDGQALCWVCAQSGKHRDH). Residues 188–250 (LQNSLLAQEE…RGSELELLQE (63 aa)) are a coiled coil. Positions 272–470 (DLTSTCPVPG…APLKLCPLKM (199 aa)) constitute a B30.2/SPRY domain.

Belongs to the TRIM/RBCC family. As to quaternary structure, homotrimer. Component of a SCF(SKP2)-like complex containing CUL1, SKP1, TRIM21 and SKP2. Interacts with CALR, CUL1, FBXW11, HSPA5, IKBKB, IRF3, SKP1 and VCP. Interacts with SKP2; the interaction with SKP2 does not depend on an intact F-box domain. Interacts (via N-terminus and C-terminus) with DCP2 (via N-terminus and C-terminus). Interacts (via C-terminus) with IRF8 (via C-terminus). Interacts with ULK1, BECN1 and with ATG8 family members, including GABARAP, GABARAPL1, GABARAPL2 and MAP1LC3C/LC3C. Interacts with TRIM21 and SQSTM1/sequestosome 1. Interacts with IRF3. Interacts (via the SPRY domain) with NMI (via coiled-coil domain); the interaction promotes 'Lys-63'-linked ubiquitination of NMI. Interacts with IFI35 and NMI; the interaction facilitates NMI-IFI35 complex formation. In terms of processing, autoubiquitinated; does not lead to its proteasomal degradation. Deubiquitinated by USP4; leading to its stabilization. Autoubiquitinated.

It localises to the cytoplasm. Its subcellular location is the cytoplasmic vesicle. It is found in the autophagosome. The protein localises to the nucleus. The protein resides in the P-body. It localises to the stress granule. It catalyses the reaction S-ubiquitinyl-[E2 ubiquitin-conjugating enzyme]-L-cysteine + [acceptor protein]-L-lysine = [E2 ubiquitin-conjugating enzyme]-L-cysteine + N(6)-ubiquitinyl-[acceptor protein]-L-lysine.. Its pathway is protein modification; protein ubiquitination. E3 ubiquitin-protein ligase whose activity is dependent on E2 enzymes, UBE2D1, UBE2D2, UBE2E1 and UBE2E2. Forms a ubiquitin ligase complex in cooperation with the E2 UBE2D2 that is used not only for the ubiquitination of USP4 and IKBKB but also for its self-ubiquitination. Component of cullin-RING-based SCF (SKP1-CUL1-F-box protein) E3 ubiquitin-protein ligase complexes such as SCF(SKP2)-like complexes. A TRIM21-containing SCF(SKP2)-like complex is shown to mediate ubiquitination of CDKN1B ('Thr-187' phosphorylated-form), thereby promoting its degradation by the proteasome. Monoubiquitinates IKBKB that will negatively regulates Tax-induced NF-kappa-B signaling. Negatively regulates IFN-beta production post-pathogen recognition by catalyzing polyubiquitin-mediated degradation of IRF3. Mediates the ubiquitin-mediated proteasomal degradation of IgG1 heavy chain, which is linked to the VCP-mediated ER-associated degradation (ERAD) pathway. Promotes IRF8 ubiquitination, which enhanced the ability of IRF8 to stimulate cytokine genes transcription in macrophages. Plays a role in the regulation of the cell cycle progression. Enhances the decapping activity of DCP2. Exists as a ribonucleoprotein particle present in all mammalian cells studied and composed of a single polypeptide and one of four small RNA molecules. At least two isoforms are present in nucleated and red blood cells, and tissue specific differences in RO/SSA proteins have been identified. The common feature of these proteins is their ability to bind HY RNAs.2. Involved in the regulation of innate immunity and the inflammatory response in response to IFNG/IFN-gamma. Organizes autophagic machinery by serving as a platform for the assembly of ULK1, Beclin 1/BECN1 and ATG8 family members and recognizes specific autophagy targets, thus coordinating target recognition with assembly of the autophagic apparatus and initiation of autophagy. Also regulates autophagy through FIP200/RB1CC1 ubiquitination and subsequent decreased protein stability. Represses the innate antiviral response by facilitating the formation of the NMI-IFI35 complex through 'Lys-63'-linked ubiquitination of NMI. During viral infection, promotes cell pyroptosis by mediating 'Lys-6'-linked ubiquitination of ISG12a/IFI27, facilitating its translocation into the mitochondria and subsequent CASP3 activation. When up-regulated through the IFN/JAK/STAT signaling pathway, promotes 'Lys-27'-linked ubiquitination of MAVS, leading to the recruitment of TBK1 and up-regulation of innate immunity. Mediates 'Lys-63'-linked polyubiquitination of G3BP1 in response to heat shock, leading to stress granule disassembly. This chain is E3 ubiquitin-protein ligase TRIM21 (Trim21), found in Mus musculus (Mouse).